Reading from the N-terminus, the 605-residue chain is UvrABC system protein C (605 aa).

Positions glycine 15 to isoleucine 92 constitute a GIY-YIG domain. Residues glycine 197–threonine 232 form the UVR domain.

The protein belongs to the UvrC family. In terms of assembly, interacts with UvrB in an incision complex.

The protein resides in the cytoplasm. Functionally, the UvrABC repair system catalyzes the recognition and processing of DNA lesions. UvrC both incises the 5' and 3' sides of the lesion. The N-terminal half is responsible for the 3' incision and the C-terminal half is responsible for the 5' incision. The chain is UvrABC system protein C from Levilactobacillus brevis (strain ATCC 367 / BCRC 12310 / CIP 105137 / JCM 1170 / LMG 11437 / NCIMB 947 / NCTC 947) (Lactobacillus brevis).